A 698-amino-acid chain; its full sequence is Sulfhydryl oxidase 2 (698 aa).

A signal peptide spans 1–21 (MAAAGAAVARSPGIGAGPALR). Residues 34 to 178 (PRLLVLLAAA…RQTMIDFLQN (145 aa)) form the Thioredoxin domain. A glycan (N-linked (GlcNAc...) asparagine) is linked at Asn77. Active-site nucleophile residues include Cys91 and Cys94. Cystine bridges form between Cys91–Cys94 and Cys122–Cys131. 3 N-linked (GlcNAc...) asparagine glycosylation sites follow: Asn178, Asn218, and Asn266. A disulfide bridge links Cys418 with Cys430. Positions 421-530 (SRSELRGYPC…EDPRFPKLQW (110 aa)) constitute an ERV/ALR sulfhydryl oxidase domain. FAD-binding positions include Arg426, Trp433, His437, Glu478, His482, 505 to 512 (WKKHNMVN), Lys527, and Trp530. A disulfide bond links Cys476 and Cys479. Cys536 and Cys539 are oxidised to a cystine. Residues 570–624 (TYSADQGDSSEGGTLARGEEEEKRLTPPEVSHGDRDTQSVRPPGALGPRPALPES) are disordered. The span at 572–581 (SADQGDSSEG) shows a compositional bias: polar residues. A Phosphoserine modification is found at Ser579. The segment covering 586-607 (RGEEEEKRLTPPEVSHGDRDTQ) has biased composition (basic and acidic residues). Residues 610 to 622 (RPPGALGPRPALP) are compositionally biased toward low complexity. Residues 662 to 682 (SLCVVLYVASSLFLMVMYFFF) traverse the membrane as a helical segment.

This sequence belongs to the quiescin-sulfhydryl oxidase (QSOX) family. FAD is required as a cofactor. Expressed in pancreas, brain, placenta, kidney, heart and fetal tissues. Weakly expressed in lung, liver and skeletal muscles.

It localises to the membrane. The protein localises to the secreted. It is found in the cell membrane. The protein resides in the nucleus membrane. It catalyses the reaction 2 R'C(R)SH + O2 = R'C(R)S-S(R)CR' + H2O2. Its function is as follows. Catalyzes the oxidation of sulfhydryl groups in peptide and protein thiols to disulfides with the reduction of oxygen to hydrogen peroxide. May contribute to disulfide bond formation in a variety of secreted proteins. Also seems to play a role in regulating the sensitization of neuroblastoma cells for interferon-gamma-induced apoptosis. The protein is Sulfhydryl oxidase 2 (QSOX2) of Homo sapiens (Human).